We begin with the raw amino-acid sequence, 147 residues long: Formiminotransferase N-terminal subdomain-containing protein (147 aa).

A signal peptide spans 1–20 (MSSSRVGLRLAACLLNVSEA).

Belongs to the formiminotransferase family. Widely expressed with highest levels in liver and skeletal muscle, and moderate levels in kidney, bone and pancreas.

This is Formiminotransferase N-terminal subdomain-containing protein (FTCDNL1) from Homo sapiens (Human).